Here is a 432-residue protein sequence, read N- to C-terminus: Amino-acid acetyltransferase (432 aa).

In terms of domain architecture, N-acetyltransferase spans 286–425; that stretch reads ELVREAAIED…ASLYNYQRNS (140 aa).

The protein belongs to the acetyltransferase family. ArgA subfamily.

It is found in the cytoplasm. The enzyme catalyses L-glutamate + acetyl-CoA = N-acetyl-L-glutamate + CoA + H(+). The protein operates within amino-acid biosynthesis; L-arginine biosynthesis; N(2)-acetyl-L-ornithine from L-glutamate: step 1/4. The polypeptide is Amino-acid acetyltransferase (Pseudomonas fluorescens (strain Pf0-1)).